A 212-amino-acid chain; its full sequence is Ribonuclease P protein component 3 (212 aa).

Belongs to the eukaryotic/archaeal RNase P protein component 3 family. As to quaternary structure, consists of a catalytic RNA component and at least 4-5 protein subunits.

The protein resides in the cytoplasm. It catalyses the reaction Endonucleolytic cleavage of RNA, removing 5'-extranucleotides from tRNA precursor.. In terms of biological role, part of ribonuclease P, a protein complex that generates mature tRNA molecules by cleaving their 5'-ends. The protein is Ribonuclease P protein component 3 of Pyrococcus abyssi (strain GE5 / Orsay).